The primary structure comprises 290 residues: ATP synthase gamma chain (290 aa).

Belongs to the ATPase gamma chain family. In terms of assembly, F-type ATPases have 2 components, CF(1) - the catalytic core - and CF(0) - the membrane proton channel. CF(1) has five subunits: alpha(3), beta(3), gamma(1), delta(1), epsilon(1). CF(0) has three main subunits: a, b and c.

Its subcellular location is the cell inner membrane. Produces ATP from ADP in the presence of a proton gradient across the membrane. The gamma chain is believed to be important in regulating ATPase activity and the flow of protons through the CF(0) complex. The polypeptide is ATP synthase gamma chain (Bacteroides fragilis (strain YCH46)).